A 74-amino-acid chain; its full sequence is Sec-independent protein translocase protein TatA (74 aa).

The chain crosses the membrane as a helical span at residues 1–21; sequence MGGISIWQLLIIVAIIVLLFG. The segment at 51 to 74 is disordered; that stretch reads ANFDKVEAKESTSTTEKTKEKEQA.

This sequence belongs to the TatA/E family. The Tat system comprises two distinct complexes: a TatABC complex, containing multiple copies of TatA, TatB and TatC subunits, and a separate TatA complex, containing only TatA subunits. Substrates initially bind to the TatABC complex, which probably triggers association of the separate TatA complex to form the active translocon.

The protein localises to the cell inner membrane. Functionally, part of the twin-arginine translocation (Tat) system that transports large folded proteins containing a characteristic twin-arginine motif in their signal peptide across membranes. TatA could form the protein-conducting channel of the Tat system. The polypeptide is Sec-independent protein translocase protein TatA (Haemophilus ducreyi (strain 35000HP / ATCC 700724)).